The sequence spans 138 residues: uncharacterized protein (138 aa).

The interval 1–27 is disordered; the sequence is MEGELIENNGLDIYDTSETPKKRGRPA.

This is an uncharacterized protein from Escherichia coli (strain K12).